We begin with the raw amino-acid sequence, 175 residues long: DPY30 domain-containing protein 1 (175 aa).

Residues 94–112 are compositionally biased toward basic and acidic residues; that stretch reads QQKEKQKSEDFETGQEKSF. Disordered stretches follow at residues 94 to 134 and 152 to 175; these read QQKE…QAEE and APNLSRVEELDEPMLSDNGVSAPP.

It belongs to the dpy-30 family. As to quaternary structure, component of the axonemal radial spoke complex 1 (RS1), at least composed of spoke head proteins RSPH1, RSPH3, RSPH9 and the cilia-specific component RSPH4A or sperm-specific component RSPH6A, spoke stalk proteins RSPH14, DNAJB13, DYDC1, ROPN1L and NME5, and the anchor protein IQUB. Interacts with SH3GL3.

The protein localises to the cytoplasm. The protein resides in the cytoskeleton. It localises to the flagellum axoneme. In terms of biological role, functions as part of axonemal radial spoke complexes that play an important part in the motility of sperm and cilia. Plays a crucial role during acrosome biogenesis. This is DPY30 domain-containing protein 1 (Dydc1) from Mus musculus (Mouse).